A 304-amino-acid chain; its full sequence is Quinolinate synthase (304 aa).

Residues His23 and Ser40 each coordinate iminosuccinate. Position 85 (Cys85) interacts with [4Fe-4S] cluster. Iminosuccinate is bound by residues 111–113 and Ser128; that span reads YIN. Position 171 (Cys171) interacts with [4Fe-4S] cluster. Residues 197–199 and Thr214 contribute to the iminosuccinate site; that span reads HPE. Cys259 contributes to the [4Fe-4S] cluster binding site.

This sequence belongs to the quinolinate synthase family. Type 2 subfamily. Requires [4Fe-4S] cluster as cofactor.

Its subcellular location is the cytoplasm. It catalyses the reaction iminosuccinate + dihydroxyacetone phosphate = quinolinate + phosphate + 2 H2O + H(+). It participates in cofactor biosynthesis; NAD(+) biosynthesis; quinolinate from iminoaspartate: step 1/1. Catalyzes the condensation of iminoaspartate with dihydroxyacetone phosphate to form quinolinate. This Clostridioides difficile (strain 630) (Peptoclostridium difficile) protein is Quinolinate synthase.